The primary structure comprises 241 residues: Urease accessory protein UreF (241 aa).

This sequence belongs to the UreF family. UreD, UreF and UreG form a complex that acts as a GTP-hydrolysis-dependent molecular chaperone, activating the urease apoprotein by helping to assemble the nickel containing metallocenter of UreC. The UreE protein probably delivers the nickel.

It localises to the cytoplasm. In terms of biological role, required for maturation of urease via the functional incorporation of the urease nickel metallocenter. In Rhodopseudomonas palustris (strain BisB18), this protein is Urease accessory protein UreF.